The following is a 198-amino-acid chain: Ras-related protein RabH (198 aa).

Residue 14-21 (GDWNVGKS) participates in GTP binding. Residues 36 to 44 (TKLSMGEHF) carry the Effector region motif. GTP is bound by residues 62 to 66 (DTSGM) and 120 to 123 (SKFD). C195 carries the cysteine methyl ester modification. A lipid anchor (S-geranylgeranyl cysteine) is attached at C195. A propeptide spans 196–198 (SIN) (removed in mature form).

This sequence belongs to the small GTPase superfamily. Rab family.

It localises to the cell membrane. This is Ras-related protein RabH (rabH) from Dictyostelium discoideum (Social amoeba).